Here is a 528-residue protein sequence, read N- to C-terminus: Beta-galactoside alpha-2,6-sialyltransferase 2 (528 aa).

Over 1 to 10 the chain is Cytoplasmic; it reads MKPNLKQWKQ. A helical; Signal-anchor for type II membrane protein transmembrane segment spans residues 11–31; that stretch reads LMLFGIFAWGLLFLVIFIYFT. Residues 32–528 are Lumenal-facing; it reads DSNSAEPVPS…CPERNNFPPL (497 aa). N-linked (GlcNAc...) asparagine glycosylation is found at Asn167, Asn308, and Asn338. 3 cysteine pairs are disulfide-bonded: Cys254-Cys519, Cys297-Cys448, and Cys466-Cys477.

It belongs to the glycosyltransferase 29 family.

It localises to the golgi apparatus. Its subcellular location is the golgi stack membrane. It carries out the reaction a beta-D-galactoside + CMP-N-acetyl-beta-neuraminate = an N-acetyl-alpha-neuraminyl-(2-&gt;6)-beta-D-galactosyl derivative + CMP + H(+). In terms of biological role, transfers sialic acid from the donor of substrate CMP-sialic acid to galactose containing acceptor substrates. In Gallus gallus (Chicken), this protein is Beta-galactoside alpha-2,6-sialyltransferase 2 (ST6GAL2).